We begin with the raw amino-acid sequence, 366 residues long: Polyamine aminopropyltransferase 2 (366 aa).

Basic and acidic residues predominate over residues 20–58 (KDKRSELDSDKFELEQQDKHDIQDKQDKQDEQNKQDKQV). The tract at residues 20-61 (KDKRSELDSDKFELEQQDKHDIQDKQDKQDEQNKQDKQVQSE) is disordered. In terms of domain architecture, PABS spans 74–305 (DVWDEISLKE…TDWGFHLATN (232 aa)). S-methyl-5'-thioadenosine is bound at residue Gln100. Spermidine-binding residues include His129 and Asp153. S-methyl-5'-thioadenosine-binding positions include Asp173 and 207–208 (DA). Residue Asp225 is the Proton acceptor of the active site.

This sequence belongs to the spermidine/spermine synthase family. As to quaternary structure, homodimer or homotetramer.

Its subcellular location is the cytoplasm. It carries out the reaction S-adenosyl 3-(methylsulfanyl)propylamine + putrescine = S-methyl-5'-thioadenosine + spermidine + H(+). The protein operates within amine and polyamine biosynthesis; spermidine biosynthesis; spermidine from putrescine: step 1/1. Its function is as follows. Catalyzes the irreversible transfer of a propylamine group from the amino donor S-adenosylmethioninamine (decarboxy-AdoMet) to putrescine (1,4-diaminobutane) to yield spermidine. The protein is Polyamine aminopropyltransferase 2 of Bacillus cereus (strain ATCC 14579 / DSM 31 / CCUG 7414 / JCM 2152 / NBRC 15305 / NCIMB 9373 / NCTC 2599 / NRRL B-3711).